The chain runs to 31 residues: Cytochrome b6-f complex subunit 6 (31 aa).

Residues 4 to 26 (ITSYFGFLLAASTITPALLIGLN) traverse the membrane as a helical segment.

This sequence belongs to the PetL family. In terms of assembly, the 4 large subunits of the cytochrome b6-f complex are cytochrome b6, subunit IV (17 kDa polypeptide, PetD), cytochrome f and the Rieske protein, while the 4 small subunits are PetG, PetL, PetM and PetN. The complex functions as a dimer.

It localises to the plastid. It is found in the chloroplast thylakoid membrane. Component of the cytochrome b6-f complex, which mediates electron transfer between photosystem II (PSII) and photosystem I (PSI), cyclic electron flow around PSI, and state transitions. PetL is important for photoautotrophic growth as well as for electron transfer efficiency and stability of the cytochrome b6-f complex. The protein is Cytochrome b6-f complex subunit 6 of Calycanthus floridus var. glaucus (Eastern sweetshrub).